A 399-amino-acid chain; its full sequence is Arginase (399 aa).

Mn(2+)-binding residues include histidine 193, aspartate 216, histidine 218, and aspartate 220. Substrate contacts are provided by residues 218–222 (HADIN), 229–231 (SGN), and aspartate 273. Positions 322 and 324 each coordinate Mn(2+). Substrate is bound by residues threonine 336 and glutamate 367.

The protein belongs to the arginase family. Mn(2+) serves as cofactor.

The protein localises to the cytoplasm. The enzyme catalyses L-arginine + H2O = urea + L-ornithine. It functions in the pathway nitrogen metabolism; urea cycle; L-ornithine and urea from L-arginine: step 1/1. This chain is Arginase (CAR1), found in Eremothecium gossypii (strain ATCC 10895 / CBS 109.51 / FGSC 9923 / NRRL Y-1056) (Yeast).